Here is a 299-residue protein sequence, read N- to C-terminus: F-actin-capping protein subunit alpha-3 (299 aa).

A phosphoserine mark is found at Ser2 and Ser290.

The protein belongs to the F-actin-capping protein alpha subunit family. Component of the F-actin capping complex, composed of a heterodimer of an alpha and a beta subunit. Component of the WASH complex, composed of F-actin-capping protein subunit alpha (CAPZA1, CAPZA2 or CAPZA3), F-actin-capping protein subunit beta (CAPZB), WASHC1, WASHC2, WASHC3, WASHC4 and WASHC5. In terms of tissue distribution, exclusively expressed in the testis.

The protein resides in the cytoplasm. It is found in the cytoskeleton. Functionally, F-actin-capping proteins bind in a Ca(2+)-independent manner to the fast growing ends of actin filaments (barbed end) thereby blocking the exchange of subunits at these ends. Unlike other capping proteins (such as gelsolin and severin), these proteins do not sever actin filaments. May play a role in the morphogenesis of spermatid. In Mus musculus (Mouse), this protein is F-actin-capping protein subunit alpha-3 (Capza3).